A 236-amino-acid chain; its full sequence is Phosphoribosylaminoimidazole-succinocarboxamide synthase (236 aa).

Belongs to the SAICAR synthetase family.

The enzyme catalyses 5-amino-1-(5-phospho-D-ribosyl)imidazole-4-carboxylate + L-aspartate + ATP = (2S)-2-[5-amino-1-(5-phospho-beta-D-ribosyl)imidazole-4-carboxamido]succinate + ADP + phosphate + 2 H(+). It functions in the pathway purine metabolism; IMP biosynthesis via de novo pathway; 5-amino-1-(5-phospho-D-ribosyl)imidazole-4-carboxamide from 5-amino-1-(5-phospho-D-ribosyl)imidazole-4-carboxylate: step 1/2. The chain is Phosphoribosylaminoimidazole-succinocarboxamide synthase from Campylobacter concisus (strain 13826).